We begin with the raw amino-acid sequence, 115 residues long: ComG operon protein 5 (115 aa).

A propeptide spans 1-7 (MWRENKG) (leader sequence). F8 bears the N-methylphenylalanine mark. Residues 13–31 (TMSALSLWLFVLLTVVPLW) form a helical membrane-spanning segment.

In terms of processing, processing of ComGE in competent cells requires ComC.

It localises to the cell membrane. Its subcellular location is the cell surface. Functionally, required for transformation and DNA binding. The protein is ComG operon protein 5 (comGE) of Bacillus subtilis (strain 168).